Reading from the N-terminus, the 350-residue chain is Xylene/toluene monooxygenase electron transfer component XylA (350 aa).

A 2Fe-2S ferredoxin-type domain is found at 16 to 108 (PESTVSVRGQ…DLEIELDTVL (93 aa)). [2Fe-2S] cluster-binding residues include Cys-52, Cys-57, Cys-60, and Cys-92. Residues 109–350 (GQALVPIETS…ADRFYNRPPC (242 aa)) form a ferredoxin--NADH reductase region. One can recognise an FAD-binding FR-type domain in the interval 114-213 (PIETSALISK…RAPYGQFGLH (100 aa)).

It belongs to the bacterial ring-hydroxylating dioxygenase ferredoxin reductase family. As to quaternary structure, monomer. The xylene/toluene monooxygenase is composed of two subunits: the electron transfer component XylA and the hydroxylase component XylM. FAD serves as cofactor. The cofactor is [2Fe-2S] cluster.

The protein localises to the cell inner membrane. The enzyme catalyses 2 reduced [2Fe-2S]-[ferredoxin] + NAD(+) + H(+) = 2 oxidized [2Fe-2S]-[ferredoxin] + NADH. With respect to regulation, the reductase activity is completely inhibited by quercetin (a common inhibitor of mammalian oxidoreductases) and p-chloromercuribenzoate, but not by iodoacetimide, N-ethylmaleimide and pyrrazole. Component of a monooxygenase that catalyzes the first step in the degradation of xylenes and toluenes. XylA is responsible for the transport of electrons from the electron donor NADH to the terminal hydroxylase component, XylM. The polypeptide is Xylene/toluene monooxygenase electron transfer component XylA (Pseudomonas putida (Arthrobacter siderocapsulatus)).